The following is a 520-amino-acid chain: Nonsense-mediated mRNA decay factor SMG9 (520 aa).

The interval 1-143 is disordered; sequence MSESGHSQPG…KGEKEGQRPT (143 aa). An N-acetylserine modification is found at S2. Residues S2, S4, S7, S32, and S53 each carry the phosphoserine modification. The span at 36-53 shows a compositional bias: basic and acidic residues; it reads GRERDYIAPWERERRDGS. A compositionally biased stretch (pro residues) spans 78–94; the sequence is QPPPPAAPAAPPAPAPL. Positions 109-121 are enriched in low complexity; that stretch reads GPAATTSTSTPEG. Over residues 122-133 the composition is skewed to pro residues; it reads TAPPPPAAPVPP. Residue S451 is modified to Phosphoserine.

This sequence belongs to the SMG9 family. Self-associates to form homodimers and forms heterodimers with SMG8; these assembly forms may represent SMG1C intermediate forms. Component of the SMG1C complex composed of SMG1, SMG8 and SMG9. Self-associates to form homodimers and forms heterodimers with SMG8; these assembly forms may represent SMG1C intermediate forms. Interacts with DHX34; the interaction is RNA-independent. Post-translationally, phosphorylated by SMG1.

Involved in nonsense-mediated decay (NMD) of mRNAs containing premature stop codons. Is recruited by release factors to stalled ribosomes together with SMG1 and SMG8 (forming the SMG1C protein kinase complex) and, in the SMG1C complex, is required for the efficient association between SMG1 and SMG8. Plays a role in brain, heart, and eye development. This chain is Nonsense-mediated mRNA decay factor SMG9, found in Bos taurus (Bovine).